Here is a 109-residue protein sequence, read N- to C-terminus: V-type proton ATPase 16 kDa proteolipid subunit (109 aa).

Residues 1 to 20 (VPVVMAGVLGIYGLIIAVII) form a helical membrane-spanning segment. Residues 21-39 (STGINPKAKPYYLFDGYAH) are Lumenal-facing. The helical transmembrane segment at 40–61 (LSSGLACGLAGLAAGMAIGIVG) threads the bilayer. Residues 62 to 73 (DAGVRANAQQPK) are Cytoplasmic-facing. A helical transmembrane segment spans residues 74-99 (LFVGMILILIFAEALALYGLIVGIIL). Topologically, residues 100 to 109 (SSRAGQSRAD) are lumenal.

Belongs to the V-ATPase proteolipid subunit family. In terms of assembly, V-ATPase is a heteromultimeric enzyme composed of a peripheral catalytic V1 complex (main components: subunits A, B, C, D, E, and F) attached to an integral membrane V0 proton pore complex (main component: the proteolipid protein; which is present as a hexamer that forms the proton-conducting pore). High expression in the mesocotyl tip of etiolated seedlings compared to the base.

It localises to the vacuole membrane. In terms of biological role, proton-conducting pore forming subunit of the membrane integral V0 complex of vacuolar ATPase. V-ATPase is responsible for acidifying a variety of intracellular compartments in eukaryotic cells. In Zea mays (Maize), this protein is V-type proton ATPase 16 kDa proteolipid subunit.